A 211-amino-acid chain; its full sequence is LexA repressor (211 aa).

A DNA-binding region (H-T-H motif) is located at residues 27–47 (QTEIARAFGFKGVRAVQHHLD). Catalysis depends on for autocatalytic cleavage activity residues serine 131 and lysine 168.

Belongs to the peptidase S24 family. As to quaternary structure, homodimer.

It carries out the reaction Hydrolysis of Ala-|-Gly bond in repressor LexA.. In terms of biological role, represses a number of genes involved in the response to DNA damage (SOS response), including recA and lexA. In the presence of single-stranded DNA, RecA interacts with LexA causing an autocatalytic cleavage which disrupts the DNA-binding part of LexA, leading to derepression of the SOS regulon and eventually DNA repair. This chain is LexA repressor, found in Xylella fastidiosa (strain M12).